The chain runs to 480 residues: Trigger factor (480 aa).

Residues 161-249 (GDRLLITGKF…VVEVLKEQLP (89 aa)) enclose the PPIase FKBP-type domain. The tract at residues 426-480 (TEEPVEKEAEEKNEEFAIDHEVLPTKDHDAIPAAKYDDNTPKGAETEDKQEKDKD) is disordered. The span at 429 to 480 (PVEKEAEEKNEEFAIDHEVLPTKDHDAIPAAKYDDNTPKGAETEDKQEKDKD) shows a compositional bias: basic and acidic residues.

This sequence belongs to the FKBP-type PPIase family. Tig subfamily.

It is found in the cytoplasm. It carries out the reaction [protein]-peptidylproline (omega=180) = [protein]-peptidylproline (omega=0). Its function is as follows. Involved in protein export. Acts as a chaperone by maintaining the newly synthesized protein in an open conformation. Functions as a peptidyl-prolyl cis-trans isomerase. In Rhodopirellula baltica (strain DSM 10527 / NCIMB 13988 / SH1), this protein is Trigger factor.